Reading from the N-terminus, the 605-residue chain is Glucose oxidase (605 aa).

The signal sequence occupies residues 1-16; the sequence is MQTLLVSSLVVSLAAA. FAD-binding residues include Leu-51 and Thr-52. N-linked (GlcNAc...) asparagine glycosylation is present at Asn-65. Glu-72 serves as a coordination point for FAD. Asn-111 carries an N-linked (GlcNAc...) asparagine glycan. FAD-binding residues include Ser-125, Asn-129, Gly-130, and Thr-132. N-linked (GlcNAc...) asparagine glycans are attached at residues Asn-183 and Asn-190. Cysteines 186 and 228 form a disulfide. Val-272 serves as a coordination point for FAD. N-linked (GlcNAc...) asparagine glycans are attached at residues Asn-280, Asn-377, Asn-410, and Asn-495. The active-site Proton acceptor is the His-538. O2-binding residues include Arg-559 and Val-560. FAD is bound by residues Gly-571 and Met-583.

It belongs to the GMC oxidoreductase family. Homodimer. FAD serves as cofactor. In terms of processing, the N-linked sugar chains of the glucose oxidase contributed to the high solubility of the enzyme in water.

Its subcellular location is the secreted. It is found in the cell wall. The protein resides in the cytoplasm. The protein localises to the extracellular space. It localises to the extracellular matrix. It catalyses the reaction beta-D-glucose + O2 = D-glucono-1,5-lactone + H2O2. In terms of biological role, glucose oxidase catalyzes the oxidation of beta-D-glucose to D-glucono-delta-lactone and hydrogen peroxide in the presence of molecular oxygen. D-glucono-delta-lactone is sequentially hydrolyzed by lactonase to D-gluconic acid, and the resulting hydrogen peroxide is hydrolyzed by catalase to oxygen and water. The activity shows high specificity to beta-D-glucose, with very low to no activity towards L-glucose, 2-deoxy-D-glucose, 3-deoxy-D-glucose, 4-deoxy-D-glucose, 5-deoxy-D-glucose, 6-deoxy-D-glucose, 3-O-methyl-D-glucose, 4-O-methyl-D-glucose, 6-O-methyl-D-glucose, 4,6-O-benzylidene-D-glucose, 5-thio-5-deoxy-D-glucose, D-mannose, D-allose, D-galactose, D-fructose, D-arabinose, D-xylose, trehalose, melibiose, L-mannomethylose, lactose, sucrose or 1,5-anhydro-D-glucitol. The polypeptide is Glucose oxidase (Aspergillus niger).